A 367-amino-acid polypeptide reads, in one-letter code: snRNA-activating protein complex subunit 1 (367 aa).

An SNAPC3-binding region spans residues 1-168 (MGTPPGLQTD…EEFKDPSDRV (168 aa)). The interval 164 to 268 (PSDRVMKLIT…AESLAKIKSK (105 aa)) is SNAPC4-binding. Disordered regions lie at residues 228 to 254 (KDRK…QETE) and 278 to 367 (KSRR…KRKH). Over residues 238 to 254 (KINDGEEKMEGNSQETE) the composition is skewed to basic and acidic residues. Serine 289 and serine 290 each carry phosphoserine. Positions 292 to 301 (CDSASGQGQV) are enriched in polar residues.

Part of the SNAPc complex composed of 5 subunits: SNAPC1, SNAPC2, SNAPC3, SNAPC4 and SNAPC5. SNAPC1 interacts with SNAPC3, SNAPC4 and TBP.

It localises to the nucleus. Part of the SNAPc complex required for the transcription of both RNA polymerase II and III small-nuclear RNA genes. Binds to the proximal sequence element (PSE), a non-TATA-box basal promoter element common to these 2 types of genes. Recruits TBP and BRF2 to the U6 snRNA TATA box. This chain is snRNA-activating protein complex subunit 1 (SNAPC1), found in Macaca fascicularis (Crab-eating macaque).